The chain runs to 321 residues: Fe-S cluster assembly protein DRE2 (321 aa).

The N-terminal SAM-like domain stretch occupies residues 1–140; that stretch reads MNNTAHSMSE…RRPASSSVAE (140 aa). A compositionally biased stretch (polar residues) spans 128 to 138; sequence IESRRPASSSV. The tract at residues 128 to 166 is disordered; that stretch reads IESRRPASSSVAEKDSTASSGMGAVKLRRKPNENGGHQQ. The segment at 140–177 is linker; sequence EKDSTASSGMGAVKLRRKPNENGGHQQKKALLWATQPE. Positions 202, 217, 220, and 222 each coordinate [2Fe-2S] cluster. The fe-S binding site A stretch occupies residues 202 to 222; that stretch reads CTVDFSAPRTRRKRACKGCTC. A disordered region spans residues 239–263; the sequence is QLDPSEVGGTGGKRTEVTTTVKGPN. [4Fe-4S] cluster contacts are provided by C283, C286, C294, and C297. Short sequence motifs (cx2C motif) lie at residues 283 to 286 and 294 to 297; these read CGSC and CSSC. Residues 283–297 form a fe-S binding site B region; sequence CGSCFLGDAFRCSSC.

This sequence belongs to the anamorsin family. As to quaternary structure, monomer. Interacts with TAH18. Interacts with MIA40. [2Fe-2S] cluster is required as a cofactor. Requires [4Fe-4S] cluster as cofactor.

Its subcellular location is the cytoplasm. It is found in the mitochondrion intermembrane space. Its function is as follows. Component of the cytosolic iron-sulfur (Fe-S) protein assembly (CIA) machinery required for the maturation of extramitochondrial Fe-S proteins. Part of an electron transfer chain functioning in an early step of cytosolic Fe-S biogenesis, facilitating the de novo assembly of a [4Fe-4S] cluster on the scaffold complex CFD1-NBP35. Electrons are transferred to DRE2 from NADPH via the FAD- and FMN-containing protein TAH18. TAH18-DRE2 are also required for the assembly of the diferric tyrosyl radical cofactor of ribonucleotide reductase (RNR), probably by providing electrons for reduction during radical cofactor maturation in the catalytic small subunit RNR2. In Malassezia globosa (strain ATCC MYA-4612 / CBS 7966) (Dandruff-associated fungus), this protein is Fe-S cluster assembly protein DRE2.